Consider the following 155-residue polypeptide: MSEQNNTEMTFQIQRIYTKDISFEAPNAPHVFQKDWQPEVKLDLDTASSQLADDVYEVVLRVTVTASLGEETAFLCEVQQGGIFSIAGIEGTQMAHCLGAYCPNILFPYARECITSVVSRGTFPQLNLAPINFDALFMNYLQQQAGEGTEEHQDA.

Belongs to the SecB family. In terms of assembly, homotetramer, a dimer of dimers. One homotetramer interacts with 1 SecA dimer.

It is found in the cytoplasm. Functionally, one of the proteins required for the normal export of preproteins out of the cell cytoplasm. It is a molecular chaperone that binds to a subset of precursor proteins, maintaining them in a translocation-competent state. It also specifically binds to its receptor SecA. The polypeptide is Protein-export protein SecB (Shigella sonnei (strain Ss046)).